Here is a 594-residue protein sequence, read N- to C-terminus: Protein FAM200C (594 aa).

This is Protein FAM200C from Homo sapiens (Human).